The primary structure comprises 307 residues: MLRVVEGIFIFVVVSESVFGVLGNGFIGLVNCIDCAKNKLSTIGFILTGLAISRIFLIWIIITDGFIQIFSPNIYASGNLIEYISYFWVIGNQSSMWFATSLSIFYFLKIANFSNYIFLWLKSRTNMVLPFMIVFLLISSLLNFAYIAKILNDYKTKNDTVWDLNMYKSEYFIKQILLNLGVIFFFTLSLITCIFLIISLWRHNRQMQSNVTGLRDSNTEAHVKAMKVLISFIILFILYFIGMAIEISCFTVRENKLLLMFGMTTTAIYPWGHSFILILGNSKLKQASLRVLQQLKCCEKRKNLRVT.

The Extracellular portion of the chain corresponds to 1 to 6 (MLRVVE). A helical transmembrane segment spans residues 7–27 (GIFIFVVVSESVFGVLGNGFI). Residues 28-42 (GLVNCIDCAKNKLST) are Cytoplasmic-facing. A helical transmembrane segment spans residues 43–63 (IGFILTGLAISRIFLIWIIIT). Residues 64–100 (DGFIQIFSPNIYASGNLIEYISYFWVIGNQSSMWFAT) lie on the Extracellular side of the membrane. The N-linked (GlcNAc...) asparagine glycan is linked to N92. Residues 101–121 (SLSIFYFLKIANFSNYIFLWL) form a helical membrane-spanning segment. The Cytoplasmic segment spans residues 122–126 (KSRTN). The helical transmembrane segment at 127 to 147 (MVLPFMIVFLLISSLLNFAYI) threads the bilayer. Residues 148-179 (AKILNDYKTKNDTVWDLNMYKSEYFIKQILLN) lie on the Extracellular side of the membrane. N158 carries N-linked (GlcNAc...) asparagine glycosylation. A helical membrane pass occupies residues 180–200 (LGVIFFFTLSLITCIFLIISL). The Cytoplasmic segment spans residues 201–227 (WRHNRQMQSNVTGLRDSNTEAHVKAMK). The helical transmembrane segment at 228–248 (VLISFIILFILYFIGMAIEIS) threads the bilayer. The Extracellular segment spans residues 249 to 257 (CFTVRENKL). Residues 258–278 (LLMFGMTTTAIYPWGHSFILI) traverse the membrane as a helical segment. The Cytoplasmic portion of the chain corresponds to 279–307 (LGNSKLKQASLRVLQQLKCCEKRKNLRVT).

Belongs to the G-protein coupled receptor T2R family. Expressed in subsets of taste receptor cells of the tongue and palate epithelium and exclusively in gustducin-positive cells.

The protein localises to the membrane. Gustducin-coupled strychnine receptor implicated in the perception of bitter compounds in the oral cavity and the gastrointestinal tract. Signals through PLCB2 and the calcium-regulated cation channel TRPM5. This Homo sapiens (Human) protein is Taste receptor type 2 member 10 (TAS2R10).